A 335-amino-acid chain; its full sequence is Glyceraldehyde-3-phosphate dehydrogenase (335 aa).

Residues 11 to 12, aspartate 33, and lysine 78 contribute to the NAD(+) site; that span reads RI. D-glyceraldehyde 3-phosphate is bound by residues 148–150, threonine 179, 208–209, and arginine 231; these read SST and TG. Asparagine 313 provides a ligand contact to NAD(+).

This sequence belongs to the glyceraldehyde-3-phosphate dehydrogenase family. In terms of assembly, homotetramer.

It is found in the cytoplasm. The enzyme catalyses D-glyceraldehyde 3-phosphate + phosphate + NAD(+) = (2R)-3-phospho-glyceroyl phosphate + NADH + H(+). It participates in carbohydrate degradation; glycolysis; pyruvate from D-glyceraldehyde 3-phosphate: step 1/5. The polypeptide is Glyceraldehyde-3-phosphate dehydrogenase (GPD) (Pleurotus sajor-caju (Oyster mushroom)).